The chain runs to 162 residues: Regulatory protein RecX (162 aa).

The protein belongs to the RecX family.

It localises to the cytoplasm. Its function is as follows. Modulates RecA activity. The polypeptide is Regulatory protein RecX (Xanthomonas oryzae pv. oryzae (strain PXO99A)).